A 627-amino-acid chain; its full sequence is Bromodomain adjacent to zinc finger domain protein 1A (627 aa).

A PHD-type zinc finger spans residues 222-272; the sequence is NARCKVCRKKGDGESMVLCDGCDRGHHIYCVRPKLKYVPEGDWFCPECHPK. The disordered stretch occupies residues 270 to 503; sequence HPKQRSHRLP…NRRSSGRHHG (234 aa). Residues 272–283 are compositionally biased toward basic residues; the sequence is KQRSHRLPSRHR. A coiled-coil region spans residues 281 to 327; the sequence is RHRYSMDSDEEEEEELDQKEEEEEEEEQEELSESENEQEDEMSEEES. Over residues 287-326 the composition is skewed to acidic residues; it reads DSDEEEEEELDQKEEEEEEEEQEELSESENEQEDEMSEEE. Residues 348–359 are compositionally biased toward low complexity; it reads TGKLGPKPKTGK. Composition is skewed to polar residues over residues 386 to 395 and 402 to 412; these read EPTSRLSASD and SPNSSLVNVVT. Residues 417–431 show a composition bias toward basic residues; that stretch reads GRGKGKGRGRGRGRL. The segment covering 486-496 has biased composition (polar residues); that stretch reads DISSLEQGNRR. The Bromo domain occupies 502-605; sequence HGVHELSACE…SFFITEAQNL (104 aa).

This sequence belongs to the WAL family. In terms of assembly, together with p18 and p20 proteins, it forms the Xenopus version of CHRAC. In terms of processing, phosphorylated in mitosis.

Its subcellular location is the nucleus. Its function is as follows. Regulatory subunit of a chromatin remodeling complex, which forms ordered nucleosome arrays on chromatin and slides edge- and center-positioned histone octamers away from their original location on the DNA template to facilitate access to DNA during DNA-templated processes such as DNA replication, transcription, and repair. Involved in regulating the spacing of nucleosomes along the chromatin and have the ability to slide mononucleosomes to the center of a DNA template in an ATP-dependent manner. May play a role in transcriptional regulation. The polypeptide is Bromodomain adjacent to zinc finger domain protein 1A (baz1a) (Xenopus laevis (African clawed frog)).